Reading from the N-terminus, the 525-residue chain is GMP synthase [glutamine-hydrolyzing] (525 aa).

The 200-residue stretch at 8–207 (KILILDFGSQ…ALDICQCDAN (200 aa)) folds into the Glutamine amidotransferase type-1 domain. Cys-85 functions as the Nucleophile in the catalytic mechanism. Active-site residues include His-181 and Glu-183. The GMPS ATP-PPase domain maps to 208–400 (WKPASIIEDA…LGLPYDMLYR (193 aa)). 235–241 (SGGVDSS) is an ATP binding site.

As to quaternary structure, homodimer.

It catalyses the reaction XMP + L-glutamine + ATP + H2O = GMP + L-glutamate + AMP + diphosphate + 2 H(+). It participates in purine metabolism; GMP biosynthesis; GMP from XMP (L-Gln route): step 1/1. In terms of biological role, catalyzes the synthesis of GMP from XMP. The protein is GMP synthase [glutamine-hydrolyzing] of Shewanella woodyi (strain ATCC 51908 / MS32).